Here is a 569-residue protein sequence, read N- to C-terminus: 2-succinyl-5-enolpyruvyl-6-hydroxy-3-cyclohexene-1-carboxylate synthase (569 aa).

It belongs to the TPP enzyme family. MenD subfamily. As to quaternary structure, homodimer. The cofactor is Mg(2+). Mn(2+) serves as cofactor. Thiamine diphosphate is required as a cofactor.

It carries out the reaction isochorismate + 2-oxoglutarate + H(+) = 5-enolpyruvoyl-6-hydroxy-2-succinyl-cyclohex-3-ene-1-carboxylate + CO2. It functions in the pathway quinol/quinone metabolism; 1,4-dihydroxy-2-naphthoate biosynthesis; 1,4-dihydroxy-2-naphthoate from chorismate: step 2/7. The protein operates within cofactor biosynthesis; phylloquinone biosynthesis. Its function is as follows. Catalyzes the thiamine diphosphate-dependent decarboxylation of 2-oxoglutarate and the subsequent addition of the resulting succinic semialdehyde-thiamine pyrophosphate anion to isochorismate to yield 2-succinyl-5-enolpyruvyl-6-hydroxy-3-cyclohexene-1-carboxylate (SEPHCHC). The chain is 2-succinyl-5-enolpyruvyl-6-hydroxy-3-cyclohexene-1-carboxylate synthase from Microcystis aeruginosa (strain NIES-843 / IAM M-2473).